The primary structure comprises 2220 residues: Non-reducing polyketide synthase stbA (2220 aa).

The interval 10 to 255 (IFSPQNSPPK…HDATNTDMAQ (246 aa)) is N-terminal acylcarrier protein transacylase domain (SAT). The Ketosynthase family 3 (KS3) domain maps to 379–803 (SDAIAVVGAG…GSNSALICSE (425 aa)). Active-site for beta-ketoacyl synthase activity residues include C551, H687, and H726. Positions 906 to 1207 (LAFSGQSRTN…ADATQHTFQA (302 aa)) are malonyl-CoA:ACP transacylase (MAT) domain. Residue S993 is the For acyl/malonyl transferase activity of the active site. The segment at 1287–1414 (EPRAAQLVRY…GDFTMTAGPH (128 aa)) is N-terminal hotdog fold. The PKS/mFAS DH domain occupies 1287–1589 (EPRAAQLVRY…FHKTSMTKLL (303 aa)). Residues 1292-1588 (QLVRYKGALG…HFHKTSMTKL (297 aa)) form a product template (PT) domain region. H1323 functions as the Proton acceptor; for dehydratase activity in the catalytic mechanism. Residues 1436 to 1589 (DAEKLRKRTA…FHKTSMTKLL (154 aa)) form a C-terminal hotdog fold region. D1500 (proton donor; for dehydratase activity) is an active-site residue. 2 consecutive Carrier domains span residues 1634-1711 (AAGP…SGGA) and 1742-1821 (PAGP…AADV). Residues S1671 and S1779 each carry the O-(pantetheine 4'-phosphoryl)serine modification. The thioesterase (TE) domain stretch occupies residues 1879–2210 (TRFRMETVVY…YDFIFTELEN (332 aa)). Active-site for thioesterase activity residues include S1999 and D2148.

It catalyses the reaction 3 malonyl-CoA + acetyl-CoA + 2 H(+) = orsellinate + 3 CO2 + 4 CoA. Its pathway is secondary metabolite biosynthesis; terpenoid biosynthesis. Functionally, non-reducing polyketide synthase; part of the cluster that mediates the biosynthesis of LL-Z1272-beta, also known as ilicicolin B, a prenylated aryl-aldehyde produced by several fungi and that serves as a key pathway intermediate for many fungal meroterpenoids. The first step in the pathway is performed by the non-reducing polyketide synthase stbA that produces orsellinic acid by condensing acetyl-CoA with 3 malonyl-CoA units. The prenyltransferase stbC then prenylates orsenilic acid into grifolic acid. Finally, grifolic acid is reduced to ilicicolin B by the NRPS-like protein stbB. The polypeptide is Non-reducing polyketide synthase stbA (Stachybotrys bisbyi (Hyalostachybotrys bisbyi)).